Here is a 448-residue protein sequence, read N- to C-terminus: Putative carbonic anhydrase 2 (448 aa).

An Alpha-carbonic anhydrase domain is found at 1 to 222 (AYRQTENLLY…PAERDVFRII (222 aa)). H19 contacts Zn(2+). N-linked (GlcNAc...) asparagine glycosylation is found at N139 and N198. Residues 229 to 448 (RREEDDERGD…DKGDDKGDDN (220 aa)) are disordered. Residues 245-280 (DDDDNYDDDDYYNDDYSNDDYYDDDYYYDDYDDDTD) show a composition bias toward acidic residues. Basic and acidic residues-rich tracts occupy residues 281–334 (DDHK…DDSG) and 342–354 (RDGR…RDRN). N-linked (GlcNAc...) asparagine glycosylation occurs at N314. A compositionally biased stretch (gly residues) spans 357–368 (NGNGRENGGVRG). A compositionally biased stretch (basic and acidic residues) spans 370 to 379 (GNDRDGRRDN). N-linked (GlcNAc...) asparagine glycosylation is present at N385. Positions 386–421 (GTRRGNGDDRGGRRNEDRGENRRGKDDQERESEDGR) are enriched in basic and acidic residues. Positions 422–435 (RRRRRFNGRRRRRG) are enriched in basic residues. Basic and acidic residues predominate over residues 436-448 (RGDDKGDDKGDDN).

This sequence belongs to the alpha-carbonic anhydrase family. Component of the acid-insoluble and acid-soluble organic matrix of calcified layers of the shell (at protein level).

It localises to the secreted. It carries out the reaction hydrogencarbonate + H(+) = CO2 + H2O. In terms of biological role, reversible hydration of carbon dioxide. The chain is Putative carbonic anhydrase 2 from Lottia gigantea (Giant owl limpet).